Here is a 186-residue protein sequence, read N- to C-terminus: Elongation factor P (186 aa).

The protein belongs to the elongation factor P family.

Its subcellular location is the cytoplasm. The protein operates within protein biosynthesis; polypeptide chain elongation. Functionally, involved in peptide bond synthesis. Stimulates efficient translation and peptide-bond synthesis on native or reconstituted 70S ribosomes in vitro. Probably functions indirectly by altering the affinity of the ribosome for aminoacyl-tRNA, thus increasing their reactivity as acceptors for peptidyl transferase. In Shewanella denitrificans (strain OS217 / ATCC BAA-1090 / DSM 15013), this protein is Elongation factor P.